A 458-amino-acid chain; its full sequence is Purple acid phosphatase 23 (458 aa).

The first 19 residues, 1 to 19 (MTLLIMITLTSISLLLAAA), serve as a signal peptide directing secretion. Asn-59, Asn-121, and Asn-136 each carry an N-linked (GlcNAc...) asparagine glycan. Asp-194 contacts Fe cation. The N-linked (GlcNAc...) asparagine glycan is linked to Asn-200. Residues Asp-221 and Tyr-224 each coordinate Fe cation. Position 221 (Asp-221) interacts with Mn(2+). Mn(2+) is bound at residue Asn-278. Position 278 (Asn-278) interacts with substrate. Residue Asn-331 is glycosylated (N-linked (GlcNAc...) asparagine). His-360 lines the Mn(2+) pocket. The Proton donor role is filled by His-370. Residue His-397 coordinates Mn(2+). 397–399 (HVH) is a substrate binding site. His-399 serves as a coordination point for Fe cation. Asn-409 and Asn-455 each carry an N-linked (GlcNAc...) asparagine glycan.

The protein belongs to the metallophosphoesterase superfamily. Purple acid phosphatase family. As to quaternary structure, homodimer. It depends on Fe cation as a cofactor. Mn(2+) serves as cofactor. As to expression, specifically expressed in flowers.

The protein resides in the secreted. The enzyme catalyses a phosphate monoester + H2O = an alcohol + phosphate. Acid phosphatase activity with ATP, ADP, dATP, pyrophosphate, polyphosphate, phosphoserine and phosphothreonine. Low or no activity with phosphotyrosine, AMP and phytate. The chain is Purple acid phosphatase 23 (PAP23) from Arabidopsis thaliana (Mouse-ear cress).